Reading from the N-terminus, the 106-residue chain is Large ribosomal subunit protein eL42 (106 aa).

The segment at 36-56 (FAQGKRRYDRKQSGYGGQTKP) is disordered.

The protein belongs to the eukaryotic ribosomal protein eL42 family.

The protein is Large ribosomal subunit protein eL42 (RPL44) of Phaffia rhodozyma (Yeast).